Here is a 50-residue protein sequence, read N- to C-terminus: Kappa-actitoxin-Bcs4a (50 aa).

This sequence belongs to the sea anemone type 5 potassium channel toxin family. In terms of processing, contains 4 disulfide bonds.

It localises to the secreted. It is found in the nematocyst. In terms of biological role, inhibits voltage-gated potassium channels (Kv1/KCNA). Is potent on Drosophila Shaker IR channels (IC(50)=94.25 nM), and rKv1.2/KCNA2 (IC(50)=172.59 nM), and moderately active on hKv1.3/KCNA3 (IC(50)=1006.48 nM), rKv1.6/KCNA6 (IC(50)=2245.93 nM), and Kv1.1/KCNA1 (IC(50) around 3 uM). In vivo, induces a rapid increase in swimming speed on zebrafish larvae, as well as death which occurs between 2 and 18 hours later. Also paralyzes swimming crabs (C.danae) when injected at the junction between the body and the walking leg. This Bunodosoma caissarum (Sea anemone) protein is Kappa-actitoxin-Bcs4a.